The following is a 307-amino-acid chain: ATP synthase gamma chain (307 aa).

Belongs to the ATPase gamma chain family. F-type ATPases have 2 components, CF(1) - the catalytic core - and CF(0) - the membrane proton channel. CF(1) has five subunits: alpha(3), beta(3), gamma(1), delta(1), epsilon(1). CF(0) has three main subunits: a, b and c.

Its subcellular location is the cell membrane. Functionally, produces ATP from ADP in the presence of a proton gradient across the membrane. The gamma chain is believed to be important in regulating ATPase activity and the flow of protons through the CF(0) complex. The sequence is that of ATP synthase gamma chain from Bifidobacterium longum (strain DJO10A).